Consider the following 270-residue polypeptide: Regulatory protein RecX (270 aa).

It belongs to the RecX family.

It localises to the cytoplasm. Functionally, modulates RecA activity. In Bacillus cytotoxicus (strain DSM 22905 / CIP 110041 / 391-98 / NVH 391-98), this protein is Regulatory protein RecX.